We begin with the raw amino-acid sequence, 367 residues long: Queuine tRNA-ribosyltransferase (367 aa).

Aspartate 92 acts as the Proton acceptor in catalysis. Substrate-binding positions include 92-96, aspartate 146, glutamine 188, and glycine 215; that span reads DSGGF. The segment at 246–252 is RNA binding; sequence GVGTPKD. Aspartate 265 serves as the catalytic Nucleophile. The Zn(2+) site is built by cysteine 303, cysteine 305, cysteine 308, and histidine 334.

Belongs to the queuine tRNA-ribosyltransferase family. In terms of assembly, homodimer. Within each dimer, one monomer is responsible for RNA recognition and catalysis, while the other monomer binds to the replacement base PreQ1. The cofactor is Zn(2+).

It catalyses the reaction 7-aminomethyl-7-carbaguanine + guanosine(34) in tRNA = 7-aminomethyl-7-carbaguanosine(34) in tRNA + guanine. It functions in the pathway tRNA modification; tRNA-queuosine biosynthesis. Its function is as follows. Catalyzes the base-exchange of a guanine (G) residue with the queuine precursor 7-aminomethyl-7-deazaguanine (PreQ1) at position 34 (anticodon wobble position) in tRNAs with GU(N) anticodons (tRNA-Asp, -Asn, -His and -Tyr). Catalysis occurs through a double-displacement mechanism. The nucleophile active site attacks the C1' of nucleotide 34 to detach the guanine base from the RNA, forming a covalent enzyme-RNA intermediate. The proton acceptor active site deprotonates the incoming PreQ1, allowing a nucleophilic attack on the C1' of the ribose to form the product. After dissociation, two additional enzymatic reactions on the tRNA convert PreQ1 to queuine (Q), resulting in the hypermodified nucleoside queuosine (7-(((4,5-cis-dihydroxy-2-cyclopenten-1-yl)amino)methyl)-7-deazaguanosine). This chain is Queuine tRNA-ribosyltransferase, found in Francisella tularensis subsp. holarctica (strain FTNF002-00 / FTA).